The following is a 172-amino-acid chain: Small ribosomal subunit protein uS4 (172 aa).

An S4 RNA-binding domain is found at 104 to 168 (RRLQTIVYRK…SPLAKMAQGG (65 aa)).

This sequence belongs to the universal ribosomal protein uS4 family. In terms of assembly, part of the 30S ribosomal subunit. Contacts protein S5. The interaction surface between S4 and S5 is involved in control of translational fidelity.

In terms of biological role, one of the primary rRNA binding proteins, it binds directly to 16S rRNA where it nucleates assembly of the body of the 30S subunit. Functionally, with S5 and S12 plays an important role in translational accuracy. This is Small ribosomal subunit protein uS4 from Thermofilum pendens (strain DSM 2475 / Hrk 5).